Consider the following 321-residue polypeptide: Ribosomal protein L11 methyltransferase (321 aa).

Residues T150, G171, D193, and N256 each contribute to the S-adenosyl-L-methionine site.

Belongs to the methyltransferase superfamily. PrmA family.

It is found in the cytoplasm. The enzyme catalyses L-lysyl-[protein] + 3 S-adenosyl-L-methionine = N(6),N(6),N(6)-trimethyl-L-lysyl-[protein] + 3 S-adenosyl-L-homocysteine + 3 H(+). Its function is as follows. Methylates ribosomal protein L11. The polypeptide is Ribosomal protein L11 methyltransferase (Herpetosiphon aurantiacus (strain ATCC 23779 / DSM 785 / 114-95)).